The primary structure comprises 143 residues: Endoribonuclease YbeY (143 aa).

The Zn(2+) site is built by His109, His113, and His119.

It belongs to the endoribonuclease YbeY family. It depends on Zn(2+) as a cofactor.

The protein localises to the cytoplasm. In terms of biological role, single strand-specific metallo-endoribonuclease involved in late-stage 70S ribosome quality control and in maturation of the 3' terminus of the 16S rRNA. This chain is Endoribonuclease YbeY, found in Carboxydothermus hydrogenoformans (strain ATCC BAA-161 / DSM 6008 / Z-2901).